The primary structure comprises 213 residues: Small ribosomal subunit protein eS1 (213 aa).

Residues 189–213 (ARPEEVAAEEETAVDVDEEDVDVEA) are disordered. The span at 194-213 (VAAEEETAVDVDEEDVDVEA) shows a compositional bias: acidic residues.

The protein belongs to the eukaryotic ribosomal protein eS1 family.

The protein is Small ribosomal subunit protein eS1 of Haloarcula marismortui (strain ATCC 43049 / DSM 3752 / JCM 8966 / VKM B-1809) (Halobacterium marismortui).